We begin with the raw amino-acid sequence, 593 residues long: RNA-binding protein 47 (593 aa).

The segment covering 1–20 (MTAEDSTAAMSSDSAAGSSA) has biased composition (low complexity). Residues 1 to 25 (MTAEDSTAAMSSDSAAGSSAKVPEG) are disordered. 3 RRM domains span residues 71–149 (CEVF…CSVD), 151–233 (CRLF…WAEP), and 246–318 (KILY…LAKP). Arg-332 carries the post-translational modification Omega-N-methylarginine. Asymmetric dimethylarginine; alternate is present on residues Arg-394 and Arg-405. Residues Arg-394 and Arg-405 each carry the omega-N-methylarginine; alternate modification.

This sequence belongs to the RRM RBM47 family. In terms of assembly, homodimer. Interacts with A1CF. Interacts with APOBEC1; form an mRNA editing complex. Interacts with RBPMS.

It localises to the nucleus. It is found in the cytoplasm. Functionally, single-stranded RNA-binding protein that functions in a variety of RNA processes, including alternative splicing, RNA stabilization, and RNA editing. Functions as an enzyme-substrate adapter for the cytidine deaminase APOBEC1. With APOBEC1 forms an mRNA editing complex involved into cytidine to uridine editing of a variety of mRNA molecules. Through the binding of their 3'UTR, also stabilizes a variety of mRNAs and regulates the expression of genes such as the interferon alpha/beta receptor and interleukin-10. Also involved in the alternative splicing of several genes including TJP1. Binds the pre-mRNA (U)GCAUG consensus sequences in downstream intronic regions of alternative exons, regulating their exclusion and inclusion into mRNAs. Independently of its RNA-binding activity, could negatively regulate MAVS by promoting its lysosomal degradation. This is RNA-binding protein 47 from Homo sapiens (Human).